Consider the following 193-residue polypeptide: Putative manganese efflux pump MntP (193 aa).

6 helical membrane passes run 3–23 (PLSI…AAIG), 37–57 (VRAG…GWML), 66–86 (AAFD…HMIV), 109–131 (LALA…SLAF), 146–166 (CTLS…ALIG), and 171–191 (ILGG…HLSG).

The protein belongs to the MntP (TC 9.B.29) family.

Its subcellular location is the cell inner membrane. Its function is as follows. Probably functions as a manganese efflux pump. The sequence is that of Putative manganese efflux pump MntP from Xanthomonas campestris pv. campestris (strain 8004).